Here is a 2703-residue protein sequence, read N- to C-terminus: Serine/arginine repetitive matrix protein 2 (2703 aa).

Met-1 carries the N-acetylmethionine modification. A coiled-coil region spans residues 60–92 (HERKRRVELRCLELEEMMEEQGYEEQQIQEKVA). Residue Lys-101 is modified to N6-acetyllysine. Residues Lys-108 and Lys-130 each participate in a glycyl lysine isopeptide (Lys-Gly) (interchain with G-Cter in SUMO2) cross-link. Residues 141-1007 (ISDSYVDGSS…SGSFHLCPGV (867 aa)) are disordered. A Phosphotyrosine modification is found at Tyr-145. Lys-169 is subject to N6-acetyllysine. Basic residues-rich tracts occupy residues 186-197 (KQKKKKKKKDRG) and 207-249 (RERK…KRSR). Positions 197 to 259 (GRRSESSSPR…STTPAPKSRR (63 aa)) are sufficient for RNA-binding. Ser-220 and Ser-222 each carry phosphoserine. The segment covering 263-284 (STSADSASSSDTSRSRSRSAAA) has biased composition (low complexity). Ser-295, Ser-300, Ser-310, Ser-322, and Ser-323 each carry phosphoserine. Over residues 319 to 334 (QQPSSPAPSTKQSSSP) the composition is skewed to low complexity. The span at 335 to 345 (YEDKDKKEKSA) shows a compositional bias: basic and acidic residues. Ser-349, Ser-351, Ser-355, and Ser-356 each carry phosphoserine. A phosphothreonine mark is found at Thr-357 and Thr-365. Ser-375, Ser-385, Ser-393, Ser-396, Ser-402, Ser-406, Ser-422, Ser-433, Ser-434, Ser-435, Ser-438, Ser-452, Ser-482, Ser-484, Ser-503, Ser-505, Ser-507, Ser-531, Ser-533, and Ser-540 each carry phosphoserine. Residues 383-396 (PSSQEPVNPSSEAS) are compositionally biased toward polar residues. Residues 425 to 437 (PTKGSRHASSSPE) show a composition bias toward polar residues. Positions 459–533 (NRSHGRAKRD…SPQRRGRSRS (75 aa)) are enriched in basic residues. Over residues 534 to 543 (PQRPGWSRSR) the composition is skewed to low complexity. 3 stretches are compositionally biased toward basic residues: residues 544–561 (NTQRRGRSRSARRGRSHS), 568–721 (GRSR…RRGR), and 730–740 (NKSRTSQRRSR). 3 positions are modified to phosphoserine: Ser-700, Ser-702, and Ser-704. Phosphoserine occurs at positions 773, 775, and 778. The span at 785–817 (SQTPTRRSRSGSSPPKQKSKTPPRQSRSNSPQP) shows a compositional bias: low complexity. Phosphoserine is present on residues Ser-821 and Ser-829. Composition is skewed to polar residues over residues 829–851 (SVTNMQADECTATPQRQSHSESS) and 859–874 (RTPSRQSCSGSSPRVK). 2 positions are modified to phosphothreonine: Thr-831 and Thr-841. 3 positions are modified to phosphoserine: Ser-846, Ser-850, and Ser-851. Composition is skewed to low complexity over residues 875 to 891 (SSTPPRQSPSRSSSPQP) and 898 to 919 (SPRGRSHSSSSSPSPSRVTSRT). Ser-882, Ser-909, Ser-924, Ser-926, Ser-928, Ser-940, Ser-942, Ser-944, Ser-945, Ser-946, and Ser-949 each carry phosphoserine. Phosphothreonine is present on Thr-955. The span at 960–1000 (SGSTSPYLKSMLQTPPDQNLSGSKSPCPQKSRDSPTGSSGS) shows a compositional bias: polar residues. Phosphoserine is present on residues Ser-962 and Ser-964. Position 966 is a phosphotyrosine (Tyr-966). Thr-973 is subject to Phosphothreonine. A phosphoserine mark is found at Ser-980, Ser-984, and Ser-993. Position 995 is a phosphothreonine (Thr-995). Phosphoserine is present on residues Ser-997, Ser-1000, Ser-1011, Ser-1037, and Ser-1038. The segment covering 1024 to 1057 (VQQKGHTQTWPDTSSPEVMQTQVESPLLQSKSQT) has biased composition (polar residues). The segment at 1024–1112 (VQQKGHTQTW…TKPDSSIYPL (89 aa)) is disordered. The residue at position 1044 (Thr-1044) is a Phosphothreonine. Ser-1048, Ser-1064, Ser-1066, Ser-1067, and Ser-1068 each carry phosphoserine. Residues 1058 to 1068 (SPKGSLSRSSS) show a composition bias toward low complexity. Residue Thr-1071 is modified to Phosphothreonine. Phosphoserine is present on residues Ser-1077, Ser-1087, Ser-1094, Ser-1097, Ser-1117, Ser-1151, Ser-1159, Ser-1175, Ser-1188, Ser-1216, Ser-1225, Ser-1229, Ser-1230, Ser-1269, Ser-1276, Ser-1278, Ser-1284, Ser-1287, Ser-1294, Ser-1305, Ser-1325, Ser-1338, Ser-1339, Ser-1340, Ser-1343, Ser-1359, and Ser-1360. The span at 1079–1092 (VKQDKSEISTDPKL) shows a compositional bias: basic and acidic residues. A disordered region spans residues 1136 to 2092 (IQEDVASSCI…RSPGMLEPLG (957 aa)). The segment covering 1146-1158 (PRDKFSPTQDRPE) has biased composition (basic and acidic residues). Basic and acidic residues predominate over residues 1270–1284 (PEHKELSHSPPRENS). Polar residues predominate over residues 1285-1304 (FESSLEFKNSGPVSEVNTGF). The residue at position 1370 (Thr-1370) is a Phosphothreonine. The span at 1371–1387 (PSRERSSSASPELKDGL) shows a compositional bias: basic and acidic residues. Phosphoserine is present on residues Ser-1372, Ser-1378, and Ser-1380. Thr-1390 bears the Phosphothreonine mark. The span at 1397–1408 (SGSSPGLRDGSG) shows a compositional bias: low complexity. A phosphoserine mark is found at Ser-1400 and Ser-1407. Thr-1409 is modified (phosphothreonine). The span at 1409-1431 (TPSRHSLSGSSPGMKDTPQTPSR) shows a compositional bias: polar residues. Ser-1414, Ser-1416, Ser-1418, and Ser-1419 each carry phosphoserine. Thr-1428 is modified (phosphothreonine). 2 positions are modified to phosphoserine: Ser-1438 and Ser-1439. Residue Thr-1448 is modified to Phosphothreonine. A phosphoserine mark is found at Ser-1453, Ser-1455, Ser-1457, Ser-1458, and Ser-1465. Polar residues predominate over residues 1454–1468 (HSPSSPERNNKSVTP). Thr-1467 carries the phosphothreonine modification. A phosphoserine mark is found at Ser-1473, Ser-1475, Ser-1477, and Ser-1478. Polar residues predominate over residues 1475-1489 (SESSVEQKNLARTSP). Thr-1487 is modified (phosphothreonine). Low complexity predominate over residues 1490 to 1499 (GQRSRSGSSQ). Phosphoserine is present on residues Ser-1493, Ser-1495, Ser-1497, Ser-1498, and Ser-1508. Residues 1511 to 1523 (ERSESDSSPDSKP) are compositionally biased toward basic and acidic residues. Over residues 1524 to 1533 (KTRTPLRQRS) the composition is skewed to basic residues. Residues Ser-1533, Ser-1535, Ser-1537, Ser-1538, Ser-1554, Ser-1556, Ser-1557, Ser-1572, Ser-1576, Ser-1577, Ser-1604, Ser-1614, Ser-1647, Ser-1649, and Ser-1650 each carry the phosphoserine modification. Residues 1604–1613 (SPEGSSSSES) show a composition bias toward low complexity. Positions 1637–1647 (KSHTPPRRRSS) are enriched in basic residues. Thr-1654 is modified (phosphothreonine). Phosphoserine occurs at positions 1683, 1685, 1687, 1688, 1718, and 1720. Composition is skewed to basic residues over residues 1725–1745 (GLQRSRSRSRREKTRTTRRRD) and 1754–1772 (SRRRQRSRSRSRVTRRRRG). Phosphoserine is present on residues Ser-1774, Ser-1778, Ser-1810, Ser-1813, Ser-1832, and Ser-1834. Positions 1776–1789 (YHSRSPTRQESSRT) are enriched in low complexity. Residues 1790–1810 (SSRRRRGRSRTPLTSRKRSRS) show a composition bias toward basic residues. The segment covering 1818–2020 (KRSRSRASPA…PRAARGKRSL (203 aa)) has biased composition (basic residues). The residue at position 1836 (Thr-1836) is a Phosphothreonine. Phosphoserine is present on residues Ser-1840 and Ser-1846. A Phosphothreonine modification is found at Thr-1848. Residues Ser-1849, Ser-1869, Ser-1872, Ser-1876, and Ser-1878 each carry the phosphoserine modification. Phosphothreonine occurs at positions 1880 and 1884. Phosphoserine occurs at positions 1898 and 1900. 2 positions are modified to phosphothreonine: Thr-1902 and Thr-1906. Phosphoserine is present on residues Ser-1910 and Ser-1912. Residues Thr-1914 and Thr-1918 each carry the phosphothreonine modification. Ser-1922, Ser-1924, and Ser-1927 each carry phosphoserine. A Phosphothreonine modification is found at Thr-1930. Phosphoserine occurs at positions 1936, 1939, 1948, 1951, 1960, 1963, 1970, and 1972. At Thr-1974 the chain carries Phosphothreonine. Ser-1982 and Ser-1984 each carry phosphoserine. Residue Thr-1986 is modified to Phosphothreonine. Phosphoserine is present on residues Ser-1994, Ser-1996, Ser-1998, and Ser-2019. The residue at position 2021 (Thr-2021) is a Phosphothreonine. A compositionally biased stretch (low complexity) spans 2022 to 2047 (RSPPAIRRRSASGSSSDRSRSATPPA). Phosphoserine is present on residues Ser-2023 and Ser-2042. A Phosphothreonine modification is found at Thr-2044. Phosphoserine is present on residues Ser-2052 and Ser-2054. Position 2056 is a phosphothreonine (Thr-2056). Residues 2062–2076 (SSSRMSCFSRPSMSP) show a composition bias toward low complexity. 4 positions are modified to phosphoserine: Ser-2070, Ser-2073, Ser-2075, and Ser-2084. Position 2096 is a phosphothreonine (Thr-2096). Residues Arg-2146, Arg-2159, Arg-2183, and Arg-2198 each carry the omega-N-methylarginine modification. The residue at position 2224 (Ser-2224) is a Phosphoserine. 2 positions are modified to omega-N-methylarginine: Arg-2226 and Arg-2240. Phosphothreonine is present on residues Thr-2241 and Thr-2254. Ser-2262 bears the Phosphoserine mark. A disordered region spans residues 2263–2703 (LTGSGTPPTA…SNRHRSSRSP (441 aa)). Phosphothreonine occurs at positions 2268 and 2281. Over residues 2269 to 2283 (PPTAANYPSSSRTPQ) the composition is skewed to polar residues. At Arg-2295 the chain carries Omega-N-methylarginine. 3 positions are modified to phosphoserine: Ser-2296, Ser-2321, and Ser-2329. A Phosphothreonine modification is found at Thr-2334. Ser-2335 is modified (phosphoserine). Arg-2337 bears the Asymmetric dimethylarginine; alternate mark. An Omega-N-methylarginine; alternate modification is found at Arg-2337. Residues Ser-2347, Ser-2351, and Ser-2360 each carry the phosphoserine modification. The residue at position 2362 (Thr-2362) is a Phosphothreonine. A phosphoserine mark is found at Ser-2365, Ser-2368, Ser-2381, Ser-2384, Ser-2404, and Ser-2408. Composition is skewed to polar residues over residues 2410 to 2443 (FSDQSRSVVQTTPVAGSQSLSSGTVAKSTSSASD) and 2467 to 2476 (TGAQQPSTLA). Low complexity predominate over residues 2487–2521 (SSSSSSSSSSSSSSSSSSSSSSSSGSSSSDSEGSS). Position 2535 is a phosphoserine (Ser-2535). Phosphothreonine is present on Thr-2537. Lys-2541 participates in a covalent cross-link: Glycyl lysine isopeptide (Lys-Gly) (interchain with G-Cter in SUMO2). Position 2553 is a phosphothreonine (Thr-2553). Positions 2562-2602 (SSSSSSSSSSSSSSSSSSSSSSSSSSSSSSSSSSSSSSSSS) are enriched in low complexity. The segment covering 2605–2622 (PAKPGPQALPKPASPKKP) has biased composition (pro residues). 10 positions are modified to phosphoserine: Ser-2618, Ser-2629, Ser-2631, Ser-2638, Ser-2642, Ser-2644, Ser-2646, Ser-2648, Ser-2656, and Ser-2660. Basic and acidic residues predominate over residues 2623–2643 (PPGERRSRSPRKPIDSLRDSR). The residue at position 2689 (Thr-2689) is a Phosphothreonine. A Phosphoserine modification is found at Ser-2691. Residues 2694-2703 (SNRHRSSRSP) are compositionally biased toward basic residues.

It belongs to the CWC21 family. Component of pre-catalytic, catalytic and post-catalytic spliceosome complexes. Found in a pre-mRNA splicing complex with SFRS4, SFRS5, SNRP70, SNRPA1, SRRM1 and SRRM2. Component of the minor spliceosome, which splices U12-type introns. Interacts with DHX8. Interacts with CACTIN.

The protein resides in the nucleus. It localises to the nucleus speckle. Required for pre-mRNA splicing as component of the spliceosome. As a component of the minor spliceosome, involved in the splicing of U12-type introns in pre-mRNAs. This Mus musculus (Mouse) protein is Serine/arginine repetitive matrix protein 2 (Srrm2).